Reading from the N-terminus, the 421-residue chain is Diaminopimelate decarboxylase (421 aa).

An N6-(pyridoxal phosphate)lysine modification is found at Lys-62. Pyridoxal 5'-phosphate contacts are provided by residues Gly-237 and 279–282 (EPGR). Arg-282, Arg-319, and Tyr-323 together coordinate substrate. Residue Cys-349 is the Proton donor of the active site. Positions 350 and 379 each coordinate substrate. Tyr-379 is a binding site for pyridoxal 5'-phosphate.

This sequence belongs to the Orn/Lys/Arg decarboxylase class-II family. LysA subfamily. As to quaternary structure, homodimer. The cofactor is pyridoxal 5'-phosphate.

It carries out the reaction meso-2,6-diaminopimelate + H(+) = L-lysine + CO2. It functions in the pathway amino-acid biosynthesis; L-lysine biosynthesis via DAP pathway; L-lysine from DL-2,6-diaminopimelate: step 1/1. Its function is as follows. Specifically catalyzes the decarboxylation of meso-diaminopimelate (meso-DAP) to L-lysine. Plays a role in beta-lactam antibiotic resistance. In Staphylococcus aureus (strain COL), this protein is Diaminopimelate decarboxylase (lysA).